The chain runs to 229 residues: Chromophore lyase CpcT/CpeT 1 (229 aa).

Belongs to the CpcT/CpeT biliprotein lyase family.

Functionally, covalently attaches a chromophore to Cys residue(s) of phycobiliproteins. The protein is Chromophore lyase CpcT/CpeT 1 of Gloeobacter violaceus (strain ATCC 29082 / PCC 7421).